The chain runs to 220 residues: Glycerol-3-phosphate acyltransferase (220 aa).

A run of 6 helical transmembrane segments spans residues 11–31 (INVI…GYAL), 70–90 (LLVL…SKLF), 96–116 (LQWM…FLNF), 127–147 (GSVV…WFFV), 153–173 (ISSL…FFVP), and 192–212 (PMVL…FNLL).

The protein belongs to the PlsY family. In terms of assembly, probably interacts with PlsX.

It localises to the cell inner membrane. The catalysed reaction is an acyl phosphate + sn-glycerol 3-phosphate = a 1-acyl-sn-glycero-3-phosphate + phosphate. Its pathway is lipid metabolism; phospholipid metabolism. In terms of biological role, catalyzes the transfer of an acyl group from acyl-phosphate (acyl-PO(4)) to glycerol-3-phosphate (G3P) to form lysophosphatidic acid (LPA). This enzyme utilizes acyl-phosphate as fatty acyl donor, but not acyl-CoA or acyl-ACP. The polypeptide is Glycerol-3-phosphate acyltransferase (Helicobacter pylori (strain J99 / ATCC 700824) (Campylobacter pylori J99)).